The following is a 495-amino-acid chain: Neuronal acetylcholine receptor subunit alpha-3 (495 aa).

The signal sequence occupies residues 1-21 (MARRSRLRRLLLLLLLPVAST). Residues 22–240 (SDAEHRLFER…PLFYTINLII (219 aa)) lie on the Extracellular side of the membrane. Residues asparagine 45 and asparagine 162 are each glycosylated (N-linked (GlcNAc...) asparagine). 2 disulfides stabilise this stretch: cysteine 149–cysteine 163 and cysteine 213–cysteine 214. The chain crosses the membrane as a helical span at residues 241–256 (PCLLISFLTVLVFYLP). Over 257 to 258 (SD) the chain is Cytoplasmic. Residues 259–275 (CGEKVTLCISVLLSLTV) traverse the membrane as a helical segment. Na(+) is bound at residue glutamate 261. At 276 to 297 (FLLVITETIPSTSLVIPLIGEY) the chain is on the extracellular side. Residues 298–316 (LLFTMIFVTLSIVITVFVL) traverse the membrane as a helical segment. The Cytoplasmic segment spans residues 317–464 (NVHYRTPTTH…QDDWKYVAMV (148 aa)). 2 positions are modified to phosphoserine: serine 403 and serine 406. The helical transmembrane segment at 465–483 (IDRIFLWVFILVCILGTAG) threads the bilayer. The Extracellular portion of the chain corresponds to 484–495 (LFLQPLMTRDDA).

Belongs to the ligand-gated ion channel (TC 1.A.9) family. Acetylcholine receptor (TC 1.A.9.1) subfamily. Alpha-3/CHRNA3 sub-subfamily. Neuronal AChR is composed of two different types of subunits: alpha and beta. CHRNA3/Alpha-3 subunit can be combined to CHRNB2/beta-2 or CHRNB4/beta-4 to give rise to functional receptors. Part of a complex composed of STUB1/CHIP, VCP/p97, CHRNA3, and UBXN2A that modulates the ubiquitination and endoplasmic reticulum-associated degradation (ERAD) of CHRNA3. Within the complex UBXN2A acts as a scaffold protein required for the interaction of CHRNA3 with VCP/p97, this interaction also inhibits CHRNA3 ubiquitination by STUB1/CHIP and subsequently ERAD. Interacts with UBXN2A (via SEP domain), the interaction is required for the interaction of CHRNA3 in the STUB1:VCP:UBXN2A complex. Interacts with RIC3; which is required for proper folding and assembly. Interacts with LYPD6. In terms of processing, ubiquitinated; by STUB1/CHIP and thereafter degraded by the 26S proteosome complex.

The protein localises to the synaptic cell membrane. The protein resides in the cell membrane. It localises to the endoplasmic reticulum. It is found in the golgi apparatus. It catalyses the reaction K(+)(in) = K(+)(out). The catalysed reaction is Na(+)(in) = Na(+)(out). It carries out the reaction Ca(2+)(in) = Ca(2+)(out). Activated by a myriad of ligands such as acetylcholine, cytisine, nicotine, choline and epibatidine. The heteropentamer CHRNA3:CHRNB2 activity is blocked by alpha-conotoxins ImI, ImII, PnIA, GID and MII. The heteropentamer CHRNA3:CHRNB4 activity is blocked by the alpha-conotoxin ImI and AuIB. Component of neuronal acetylcholine receptors (nAChRs) that function as pentameric, ligand-gated cation channels with high calcium permeability among other activities. nAChRs are excitatory neurotrasnmitter receptors formed by a collection of nAChR subunits known to mediate synaptic transmission in the nervous system and the neuromuscular junction. Each nAchR subunit confers differential attributes to channel properties, including activation, deactivation and desensitization kinetics, pH sensitivity, cation permeability, and binding to allosteric modulators. CHRNA3 forms heteropentameric neuronal acetylcholine receptors with CHRNB2 and CHRNB4. CHRNA3:CHRNB4 being predominant in neurons of the autonomic ganglia, it is known as ganglionic nicotinic receptor. CHRNA3:CHRNB4 also plays an important role in the habenulo-interpeduncular tract, modulating the mesolimbic dopamine system and affecting reward circuits and addiction. Hypothalamic CHRNA3:CHRNB4 nAChR activation by nicotine leads to activation of POMC neurons and a decrease in food intake. Also expressed in the urothelium where it modulates reflex bladder activity by increasing intracellular calcium through extracellular influx and basal ATP release. The polypeptide is Neuronal acetylcholine receptor subunit alpha-3 (CHRNA3) (Bos taurus (Bovine)).